The following is a 1744-amino-acid chain: DNA-directed RNA polymerase I subunit RPA1 (1744 aa).

Cysteine 56, cysteine 69, and histidine 72 together coordinate Zn(2+). Mg(2+)-binding residues include aspartate 597, aspartate 599, and aspartate 601. Residues 953–965 (PAEYTIHAMAGRD) form a bridging helix region. Positions 1333–1484 (VPREKESGDG…RDGTDWGGTS (152 aa)) are disordered. 2 stretches are compositionally biased toward gly residues: residues 1341–1354 (DGSGNTGGMKGGSG) and 1366–1376 (DDGGGPLGGTF). Over residues 1464–1478 (RDAEDGGEMQDRDGT) the composition is skewed to basic and acidic residues.

The protein belongs to the RNA polymerase beta' chain family. Component of the RNA polymerase I (Pol I) complex consisting of at least 13 subunits. Post-translationally, phosphorylated.

Its subcellular location is the nucleus. The protein resides in the nucleolus. The enzyme catalyses RNA(n) + a ribonucleoside 5'-triphosphate = RNA(n+1) + diphosphate. Its function is as follows. DNA-dependent RNA polymerase catalyzes the transcription of DNA into RNA using the four ribonucleoside triphosphates as substrates. Largest and catalytic core component of RNA polymerase I which synthesizes ribosomal RNA precursors. Forms the polymerase active center together with the second largest subunit. A single stranded DNA template strand of the promoter is positioned within the central active site cleft of Pol I. A bridging helix emanates from RPA1 and crosses the cleft near the catalytic site and is thought to promote translocation of Pol I by acting as a ratchet that moves the RNA-DNA hybrid through the active site by switching from straight to bent conformations at each step of nucleotide addition. The sequence is that of DNA-directed RNA polymerase I subunit RPA1 (TRP11) from Trypanosoma brucei brucei.